We begin with the raw amino-acid sequence, 62 residues long: Large ribosomal subunit protein bL33 (62 aa).

The protein belongs to the bacterial ribosomal protein bL33 family.

This Cyanothece sp. (strain PCC 7425 / ATCC 29141) protein is Large ribosomal subunit protein bL33.